The following is a 131-amino-acid chain: UPF0102 protein YraN (131 aa).

Residues 1–19 are compositionally biased toward polar residues; sequence MATVPTRSGSPRQLTTKQT. The segment at 1-20 is disordered; that stretch reads MATVPTRSGSPRQLTTKQTG.

Belongs to the UPF0102 family.

In Escherichia coli O8 (strain IAI1), this protein is UPF0102 protein YraN.